Here is a 215-residue protein sequence, read N- to C-terminus: MTQTLADMRRDYTRDGLSEAQAPLDPFTLFRQWFDDAVKTEQLPVEPNAMTLATVDEDGRPHCRVLLLKGLDERGFTFFSNYESAKGRQLAARPYAAMTFFWPSLERQVRIEGRVERVTPAESDGYFQVRPLGSRIGAWASPQSRVIRDRAELENLLAETEKRFLNQAPHCPPHWGGYRLLPERIEFWQGRPSRLHDRLDYRLQGEAWIRQRLAP.

Substrate contacts are provided by residues R9 to Y12 and K69. FMN is bound by residues R64–K69, F79–S80, K86, and Q108. Substrate is bound by residues Y126, R130, and S134. Residues Q143–S144 and W188 each bind FMN. R194 to H196 provides a ligand contact to substrate. FMN is bound at residue R198.

It belongs to the pyridoxamine 5'-phosphate oxidase family. In terms of assembly, homodimer. FMN is required as a cofactor.

The catalysed reaction is pyridoxamine 5'-phosphate + O2 + H2O = pyridoxal 5'-phosphate + H2O2 + NH4(+). It catalyses the reaction pyridoxine 5'-phosphate + O2 = pyridoxal 5'-phosphate + H2O2. It functions in the pathway cofactor metabolism; pyridoxal 5'-phosphate salvage; pyridoxal 5'-phosphate from pyridoxamine 5'-phosphate: step 1/1. It participates in cofactor metabolism; pyridoxal 5'-phosphate salvage; pyridoxal 5'-phosphate from pyridoxine 5'-phosphate: step 1/1. Its function is as follows. Catalyzes the oxidation of either pyridoxine 5'-phosphate (PNP) or pyridoxamine 5'-phosphate (PMP) into pyridoxal 5'-phosphate (PLP). This chain is Pyridoxine/pyridoxamine 5'-phosphate oxidase, found in Ectopseudomonas mendocina (strain ymp) (Pseudomonas mendocina).